Consider the following 123-residue polypeptide: Immunoglobulin lambda variable 9-49 (123 aa).

The first 19 residues, 1-19 (MAWAPLLLTLLSLLTGSLS), serve as a signal peptide directing secretion. Residues 20-44 (QPVLTQPPSASASLGASVTLTCTLS) form a framework-1 region. Residues 21–123 (PVLTQPPSAS…ADHGSGSNFV (103 aa)) form the Ig-like domain. Cysteines 41 and 112 form a disulfide. A complementarity-determining-1 region spans residues 45–51 (SGYSNYK). The tract at residues 52–68 (VDWYQQRPGKGPRFVMR) is framework-2. The interval 69–76 (VGTGGIVG) is complementarity-determining-2. The interval 77 to 112 (SKGDGIPDRFSVLGSGLNRYLTIKNIQEEDESDYHC) is framework-3. Tyrosine 96 is modified (phosphotyrosine). A Phosphothreonine modification is found at threonine 98. The complementarity-determining-3 stretch occupies residues 113-123 (GADHGSGSNFV).

In terms of assembly, immunoglobulins are composed of two identical heavy chains and two identical light chains; disulfide-linked.

It localises to the secreted. Its subcellular location is the cell membrane. Its function is as follows. V region of the variable domain of immunoglobulin light chains that participates in the antigen recognition. Immunoglobulins, also known as antibodies, are membrane-bound or secreted glycoproteins produced by B lymphocytes. In the recognition phase of humoral immunity, the membrane-bound immunoglobulins serve as receptors which, upon binding of a specific antigen, trigger the clonal expansion and differentiation of B lymphocytes into immunoglobulins-secreting plasma cells. Secreted immunoglobulins mediate the effector phase of humoral immunity, which results in the elimination of bound antigens. The antigen binding site is formed by the variable domain of one heavy chain, together with that of its associated light chain. Thus, each immunoglobulin has two antigen binding sites with remarkable affinity for a particular antigen. The variable domains are assembled by a process called V-(D)-J rearrangement and can then be subjected to somatic hypermutations which, after exposure to antigen and selection, allow affinity maturation for a particular antigen. The sequence is that of Immunoglobulin lambda variable 9-49 from Homo sapiens (Human).